The following is a 90-amino-acid chain: Hemoglobin subunit alpha-1 (90 aa).

Positions 1–90 (VLTDDDKNHV…SKLSDLHAEK (90 aa)) constitute a Globin domain.

The protein belongs to the globin family. Heterotetramer of two alpha chains and two beta chains. Red blood cells.

Its function is as follows. Involved in oxygen transport from the lung to the various peripheral tissues. This Saara hardwickii (Indian spiny-tailed lizard) protein is Hemoglobin subunit alpha-1.